A 398-amino-acid polypeptide reads, in one-letter code: Deoxyguanosinetriphosphate triphosphohydrolase-like protein (398 aa).

The 148-residue stretch at 68–215 (RLTHTLEVAQ…AAISDDIAYD (148 aa)) folds into the HD domain.

It belongs to the dGTPase family. Type 2 subfamily.

The polypeptide is Deoxyguanosinetriphosphate triphosphohydrolase-like protein (Azorhizobium caulinodans (strain ATCC 43989 / DSM 5975 / JCM 20966 / LMG 6465 / NBRC 14845 / NCIMB 13405 / ORS 571)).